The sequence spans 227 residues: Cytochrome c oxidase subunit 2 (227 aa).

The Mitochondrial intermembrane portion of the chain corresponds to 1 to 14 (MAYPFQLGLQDATS). A helical membrane pass occupies residues 15-45 (PIMEELMNFHDHTLMIVFLISTLVLYIISLM). Topologically, residues 46–59 (LTTKLTHTSTMDAQ) are mitochondrial matrix. A helical transmembrane segment spans residues 60–87 (EVETIWTILPAVILILIALPSLRILYMM). Topologically, residues 88-227 (DEINNPALTV…YFENWSASMI (140 aa)) are mitochondrial intermembrane. Cu cation-binding residues include His161, Cys196, Glu198, Cys200, His204, and Met207. A Mg(2+)-binding site is contributed by Glu198. Tyr218 carries the post-translational modification Phosphotyrosine.

This sequence belongs to the cytochrome c oxidase subunit 2 family. As to quaternary structure, component of the cytochrome c oxidase (complex IV, CIV), a multisubunit enzyme composed of 14 subunits. The complex is composed of a catalytic core of 3 subunits MT-CO1, MT-CO2 and MT-CO3, encoded in the mitochondrial DNA, and 11 supernumerary subunits COX4I, COX5A, COX5B, COX6A, COX6B, COX6C, COX7A, COX7B, COX7C, COX8 and NDUFA4, which are encoded in the nuclear genome. The complex exists as a monomer or a dimer and forms supercomplexes (SCs) in the inner mitochondrial membrane with NADH-ubiquinone oxidoreductase (complex I, CI) and ubiquinol-cytochrome c oxidoreductase (cytochrome b-c1 complex, complex III, CIII), resulting in different assemblies (supercomplex SCI(1)III(2)IV(1) and megacomplex MCI(2)III(2)IV(2)). Found in a complex with TMEM177, COA6, COX18, COX20, SCO1 and SCO2. Interacts with TMEM177 in a COX20-dependent manner. Interacts with COX20. Interacts with COX16. Cu cation serves as cofactor.

It localises to the mitochondrion inner membrane. The enzyme catalyses 4 Fe(II)-[cytochrome c] + O2 + 8 H(+)(in) = 4 Fe(III)-[cytochrome c] + 2 H2O + 4 H(+)(out). Functionally, component of the cytochrome c oxidase, the last enzyme in the mitochondrial electron transport chain which drives oxidative phosphorylation. The respiratory chain contains 3 multisubunit complexes succinate dehydrogenase (complex II, CII), ubiquinol-cytochrome c oxidoreductase (cytochrome b-c1 complex, complex III, CIII) and cytochrome c oxidase (complex IV, CIV), that cooperate to transfer electrons derived from NADH and succinate to molecular oxygen, creating an electrochemical gradient over the inner membrane that drives transmembrane transport and the ATP synthase. Cytochrome c oxidase is the component of the respiratory chain that catalyzes the reduction of oxygen to water. Electrons originating from reduced cytochrome c in the intermembrane space (IMS) are transferred via the dinuclear copper A center (CU(A)) of subunit 2 and heme A of subunit 1 to the active site in subunit 1, a binuclear center (BNC) formed by heme A3 and copper B (CU(B)). The BNC reduces molecular oxygen to 2 water molecules using 4 electrons from cytochrome c in the IMS and 4 protons from the mitochondrial matrix. The chain is Cytochrome c oxidase subunit 2 (MT-CO2) from Maxomys surifer (Indomalayan maxomys).